We begin with the raw amino-acid sequence, 386 residues long: Succinate--CoA ligase [ADP-forming] subunit beta (386 aa).

Residues 9–244 form the ATP-grasp domain; the sequence is KAVLRSYGVS…LDEEDSKEIE (236 aa). ATP-binding positions include Lys46, 53-55, Glu99, Cys102, and Glu107; that span reads GRG. Mg(2+) is bound by residues Asn199 and Asp213. Residues Asn264 and 321–323 contribute to the substrate site; that span reads GIM.

It belongs to the succinate/malate CoA ligase beta subunit family. In terms of assembly, heterotetramer of two alpha and two beta subunits. Mg(2+) serves as cofactor.

It carries out the reaction succinate + ATP + CoA = succinyl-CoA + ADP + phosphate. The catalysed reaction is GTP + succinate + CoA = succinyl-CoA + GDP + phosphate. It participates in carbohydrate metabolism; tricarboxylic acid cycle; succinate from succinyl-CoA (ligase route): step 1/1. In terms of biological role, succinyl-CoA synthetase functions in the citric acid cycle (TCA), coupling the hydrolysis of succinyl-CoA to the synthesis of either ATP or GTP and thus represents the only step of substrate-level phosphorylation in the TCA. The beta subunit provides nucleotide specificity of the enzyme and binds the substrate succinate, while the binding sites for coenzyme A and phosphate are found in the alpha subunit. The protein is Succinate--CoA ligase [ADP-forming] subunit beta of Bacillus cereus (strain G9842).